A 357-amino-acid polypeptide reads, in one-letter code: Chorismate synthase (357 aa).

R46 lines the NADP(+) pocket. Residues 123-125 (RSS), 235-236 (NA), G275, 290-294 (KPTPS), and R316 each bind FMN.

The protein belongs to the chorismate synthase family. Homotetramer. FMNH2 serves as cofactor.

The enzyme catalyses 5-O-(1-carboxyvinyl)-3-phosphoshikimate = chorismate + phosphate. It participates in metabolic intermediate biosynthesis; chorismate biosynthesis; chorismate from D-erythrose 4-phosphate and phosphoenolpyruvate: step 7/7. In terms of biological role, catalyzes the anti-1,4-elimination of the C-3 phosphate and the C-6 proR hydrogen from 5-enolpyruvylshikimate-3-phosphate (EPSP) to yield chorismate, which is the branch point compound that serves as the starting substrate for the three terminal pathways of aromatic amino acid biosynthesis. This reaction introduces a second double bond into the aromatic ring system. The sequence is that of Chorismate synthase from Sulfurovum sp. (strain NBC37-1).